The chain runs to 452 residues: NADH-cytochrome b5 reductase-like protein alnC (452 aa).

Residues 4–80 (PASITLAEVA…LKTLLVGSLQ (77 aa)) enclose the Cytochrome b5 heme-binding domain. An FMN-binding site is contributed by 33 to 38 (AEYRED). Positions 39 and 63 each coordinate heme. FMN contacts are provided by residues 80–83 (QSKT) and 116–125 (NDTSKYGQLP). A run of 2 helical transmembrane segments spans residues 120-140 (KYGQ…FFTL) and 166-186 (VGFL…ATFV). The FAD-binding FR-type domain occupies 225–324 (NTQQFLTLVD…RGPFGRYSPS (100 aa)). 302–305 (YLLN) serves as a coordination point for FAD. NADP(+) is bound by residues 389 to 390 (GQ) and 395 to 399 (WKGLR).

This sequence belongs to the flavoprotein pyridine nucleotide cytochrome reductase family. FAD serves as cofactor. It depends on FMN as a cofactor.

It localises to the membrane. It participates in polyketide biosynthesis. Its function is as follows. NADH-cytochrome b5 reductase-like protein; part of the gene cluster that mediates the biosynthesis of asperlin, a polyketide showing anti-inflammatory, antitumor and antibiotic activities. The first step of the asperlin biosynthesis is the production of the intermediate 2,4,6-octatrienoic acid by the highly redusing polyketide synthase alnA with cleavage of the PKS product by the esterase alnB. 2,4,6-octatrienoic acid is further converted to asperlin via several steps involving the remaining enzymes from the cluster. This chain is NADH-cytochrome b5 reductase-like protein alnC, found in Emericella nidulans (strain FGSC A4 / ATCC 38163 / CBS 112.46 / NRRL 194 / M139) (Aspergillus nidulans).